Reading from the N-terminus, the 252-residue chain is Probable transcriptional regulatory protein Ava_1228 (252 aa).

The protein belongs to the TACO1 family.

Its subcellular location is the cytoplasm. The polypeptide is Probable transcriptional regulatory protein Ava_1228 (Trichormus variabilis (strain ATCC 29413 / PCC 7937) (Anabaena variabilis)).